Reading from the N-terminus, the 387-residue chain is Phosphoglycerate kinase (387 aa).

Substrate contacts are provided by residues 21–23, Arg-36, 59–62, Arg-113, and Arg-146; these read DLN and HLGR. Residues Lys-197, Glu-314, and 340–343 each bind ATP; that span reads GGDT.

Belongs to the phosphoglycerate kinase family. In terms of assembly, monomer.

Its subcellular location is the cytoplasm. It catalyses the reaction (2R)-3-phosphoglycerate + ATP = (2R)-3-phospho-glyceroyl phosphate + ADP. The protein operates within carbohydrate degradation; glycolysis; pyruvate from D-glyceraldehyde 3-phosphate: step 2/5. This Pseudomonas savastanoi pv. phaseolicola (strain 1448A / Race 6) (Pseudomonas syringae pv. phaseolicola (strain 1448A / Race 6)) protein is Phosphoglycerate kinase.